We begin with the raw amino-acid sequence, 911 residues long: Protein translocase subunit SecA (911 aa).

ATP is bound by residues Q87, 105–109, and D499; that span reads GEGKT. Residues C895, C897, C906, and H907 each coordinate Zn(2+).

Belongs to the SecA family. Monomer and homodimer. Part of the essential Sec protein translocation apparatus which comprises SecA, SecYEG and auxiliary proteins SecDF-YajC and YidC. Zn(2+) is required as a cofactor.

Its subcellular location is the cell inner membrane. It localises to the cytoplasm. The catalysed reaction is ATP + H2O + cellular proteinSide 1 = ADP + phosphate + cellular proteinSide 2.. Functionally, part of the Sec protein translocase complex. Interacts with the SecYEG preprotein conducting channel. Has a central role in coupling the hydrolysis of ATP to the transfer of proteins into and across the cell membrane, serving both as a receptor for the preprotein-SecB complex and as an ATP-driven molecular motor driving the stepwise translocation of polypeptide chains across the membrane. This is Protein translocase subunit SecA from Novosphingobium aromaticivorans (strain ATCC 700278 / DSM 12444 / CCUG 56034 / CIP 105152 / NBRC 16084 / F199).